The sequence spans 335 residues: Fructose-1,6-bisphosphatase class 1 (335 aa).

Glu91, Asp113, Leu115, and Asp116 together coordinate Mg(2+). Residues 116–119 (DGSS), Asn208, and Lys274 contribute to the substrate site. Glu280 provides a ligand contact to Mg(2+).

The protein belongs to the FBPase class 1 family. In terms of assembly, homotetramer. Requires Mg(2+) as cofactor.

The protein resides in the cytoplasm. The catalysed reaction is beta-D-fructose 1,6-bisphosphate + H2O = beta-D-fructose 6-phosphate + phosphate. It participates in carbohydrate biosynthesis; gluconeogenesis. The sequence is that of Fructose-1,6-bisphosphatase class 1 from Chromobacterium violaceum (strain ATCC 12472 / DSM 30191 / JCM 1249 / CCUG 213 / NBRC 12614 / NCIMB 9131 / NCTC 9757 / MK).